A 1214-amino-acid polypeptide reads, in one-letter code: ATP-dependent helicase/nuclease subunit A (1214 aa).

Residues 27–483 (HKRTAQQIEA…ILLKENFRSQ (457 aa)) enclose the UvrD-like helicase ATP-binding domain. 48–55 (ASAGSGKT) provides a ligand contact to ATP. The UvrD-like helicase C-terminal domain occupies 512 to 800 (QLVAGSEAQK…NLMTIHKSKG (289 aa)).

This sequence belongs to the helicase family. AddA subfamily. Heterodimer of AddA and AddB/RexB. Mg(2+) is required as a cofactor.

The catalysed reaction is Couples ATP hydrolysis with the unwinding of duplex DNA by translocating in the 3'-5' direction.. The enzyme catalyses ATP + H2O = ADP + phosphate + H(+). In terms of biological role, the heterodimer acts as both an ATP-dependent DNA helicase and an ATP-dependent, dual-direction single-stranded exonuclease. Recognizes the chi site generating a DNA molecule suitable for the initiation of homologous recombination. The AddA nuclease domain is required for chi fragment generation; this subunit has the helicase and 3' -&gt; 5' nuclease activities. The chain is ATP-dependent helicase/nuclease subunit A from Streptococcus equi subsp. zooepidemicus (strain MGCS10565).